The primary structure comprises 290 residues: TP53-target gene 5 protein (290 aa).

Residues 1-13 show a composition bias toward basic residues; the sequence is MSPSAKKRPKNSR. 2 disordered regions span residues 1–29 and 114–178; these read MSPS…TEQP and KLES…RQPL. Basic and acidic residues-rich tracts occupy residues 16-26, 114-130, and 138-167; these read KMQDEKLRDET, KLES…KEWK, and RNKE…RDDS.

Interacts with p53/TP53. Highly expressed in heart, brain and small intestine. Less abundant in skeletal muscle, spleen, prostate, ovary and colon. A smaller transcript is expressed specifically in the testis.

Its subcellular location is the cytoplasm. The protein localises to the nucleus. Functionally, may play a significant role in p53/TP53-mediating signaling pathway. This is TP53-target gene 5 protein (TP53TG5) from Homo sapiens (Human).